The chain runs to 273 residues: ATP synthase F(1) complex subunit gamma, mitochondrial (273 aa).

Position 14 is an N6-acetyllysine (Lys14). Position 24 is an N6-succinyllysine (Lys24). The residue at position 30 (Lys30) is an N6-acetyllysine. N6-acetyllysine; alternate is present on Lys90. Residue Lys90 is modified to N6-succinyllysine; alternate. N6-acetyllysine is present on Lys113. Ser121 is subject to Phosphoserine. The residue at position 129 (Lys129) is an N6-acetyllysine; alternate. An N6-succinyllysine; alternate modification is found at Lys129. Residue Lys172 is modified to N6-acetyllysine. Lys245 bears the N6-succinyllysine mark.

This sequence belongs to the ATPase gamma chain family. As to quaternary structure, component of the ATP synthase complex composed at least of ATP5F1A/subunit alpha, ATP5F1B/subunit beta, ATP5MC1/subunit c (homooctomer), MT-ATP6/subunit a, MT-ATP8/subunit 8, ATP5ME/subunit e, ATP5MF/subunit f, ATP5MG/subunit g, ATP5MK/subunit k, ATP5MJ/subunit j, ATP5F1C/subunit gamma, ATP5F1D/subunit delta, ATP5F1E/subunit epsilon, ATP5PF/subunit F6, ATP5PB/subunit b, ATP5PD/subunit d, ATP5PO/subunit OSCP. ATP synthase complex consists of a soluble F(1) head domain (subunits alpha(3) and beta(3)) - the catalytic core - and a membrane F(0) domain - the membrane proton channel (subunits c, a, 8, e, f, g, k and j). These two domains are linked by a central stalk (subunits gamma, delta, and epsilon) rotating inside the F1 region and a stationary peripheral stalk (subunits F6, b, d, and OSCP). Interacts with FLVCR2; this interaction occurs in the absence of heme and is disrupted upon heme binding.

Its subcellular location is the mitochondrion inner membrane. Its function is as follows. Subunit gamma, of the mitochondrial membrane ATP synthase complex (F(1)F(0) ATP synthase or Complex V) that produces ATP from ADP in the presence of a proton gradient across the membrane which is generated by electron transport complexes of the respiratory chain. ATP synthase complex consist of a soluble F(1) head domain - the catalytic core - and a membrane F(1) domain - the membrane proton channel. These two domains are linked by a central stalk rotating inside the F(1) region and a stationary peripheral stalk. During catalysis, ATP synthesis in the catalytic domain of F(1) is coupled via a rotary mechanism of the central stalk subunits to proton translocation. In vivo, can only synthesize ATP although its ATP hydrolase activity can be activated artificially in vitro. With the central stalk subunit delta, is essential for the biogenesis of F(1) catalytic part of the ATP synthase complex namely in the formation of F1 assembly intermediate. The sequence is that of ATP synthase F(1) complex subunit gamma, mitochondrial from Rattus norvegicus (Rat).